Reading from the N-terminus, the 416-residue chain is Serine hydroxymethyltransferase (416 aa).

Residues Leu121 and 125–127 (GHL) contribute to the (6S)-5,6,7,8-tetrahydrofolate site. Residue Lys229 is modified to N6-(pyridoxal phosphate)lysine.

The protein belongs to the SHMT family. Homodimer. Pyridoxal 5'-phosphate serves as cofactor.

It is found in the cytoplasm. It carries out the reaction (6R)-5,10-methylene-5,6,7,8-tetrahydrofolate + glycine + H2O = (6S)-5,6,7,8-tetrahydrofolate + L-serine. It functions in the pathway one-carbon metabolism; tetrahydrofolate interconversion. The protein operates within amino-acid biosynthesis; glycine biosynthesis; glycine from L-serine: step 1/1. In terms of biological role, catalyzes the reversible interconversion of serine and glycine with tetrahydrofolate (THF) serving as the one-carbon carrier. This reaction serves as the major source of one-carbon groups required for the biosynthesis of purines, thymidylate, methionine, and other important biomolecules. Also exhibits THF-independent aldolase activity toward beta-hydroxyamino acids, producing glycine and aldehydes, via a retro-aldol mechanism. The polypeptide is Serine hydroxymethyltransferase (Neisseria meningitidis serogroup C / serotype 2a (strain ATCC 700532 / DSM 15464 / FAM18)).